We begin with the raw amino-acid sequence, 456 residues long: Tyrosine phenol-lyase (456 aa).

Residue Lys257 is modified to N6-(pyridoxal phosphate)lysine.

This sequence belongs to the beta-eliminating lyase family. As to quaternary structure, homotetramer. Pyridoxal 5'-phosphate serves as cofactor. Post-translationally, contains L-DOPA (3',4'-dihydroxyphenylalanine).

It localises to the cytoplasm. The enzyme catalyses L-tyrosine + H2O = phenol + pyruvate + NH4(+). This is Tyrosine phenol-lyase (tpl) from Enterobacter agglomerans (Erwinia herbicola).